A 446-amino-acid chain; its full sequence is Thymidine phosphorylase (446 aa).

It belongs to the thymidine/pyrimidine-nucleoside phosphorylase family. Homodimer.

The catalysed reaction is thymidine + phosphate = 2-deoxy-alpha-D-ribose 1-phosphate + thymine. The protein operates within pyrimidine metabolism; dTMP biosynthesis via salvage pathway; dTMP from thymine: step 1/2. Its function is as follows. The enzymes which catalyze the reversible phosphorolysis of pyrimidine nucleosides are involved in the degradation of these compounds and in their utilization as carbon and energy sources, or in the rescue of pyrimidine bases for nucleotide synthesis. This is Thymidine phosphorylase from Psychromonas ingrahamii (strain DSM 17664 / CCUG 51855 / 37).